The chain runs to 422 residues: Exodeoxyribonuclease 7 large subunit (422 aa).

This sequence belongs to the XseA family. Heterooligomer composed of large and small subunits.

Its subcellular location is the cytoplasm. The enzyme catalyses Exonucleolytic cleavage in either 5'- to 3'- or 3'- to 5'-direction to yield nucleoside 5'-phosphates.. Bidirectionally degrades single-stranded DNA into large acid-insoluble oligonucleotides, which are then degraded further into small acid-soluble oligonucleotides. In Leptospira borgpetersenii serovar Hardjo-bovis (strain JB197), this protein is Exodeoxyribonuclease 7 large subunit.